The following is a 429-amino-acid chain: MKERTIQPVNNGLNGNITIPGDKSISHRAVMFGAIAEGKTTIKGFLPGADCLSTISCFKEMGVDIVQNGDEVTVVGKGLEGLQEPKAVLDVGNSGTTIRLMSGILANTPFFSCVQGDASIAKRPMKRVTNPLKQMGANIDGREEGTFTPLTIRGGDLKAIEYTSPVASAQVKSAILLAGLRAEGVTAVTEPHISRDHTERMLEAFGVKVTREGKTVKLAGGQKLTATDVQVPGDVSSAAFFLVAGAIIPNSKLVLENVGMNPTRTGIIDVLEKMGATFTVEPINEGASEPAANITIETSSLKGIEIGGDIIPRLIDEIPVIALAATQAEGITVIKDAHELKVKETNRIDTVVAELTKLGARIEATDDGMIIYGKSVLKGNTVNSYGDHRIGMMLAIAGCLAEGKTTIEDAEAVGVSYPTFFEELQKLAK.

Lys23, Ser24, and Arg28 together coordinate 3-phosphoshikimate. Residue Lys23 participates in phosphoenolpyruvate binding. The phosphoenolpyruvate site is built by Gly95 and Arg123. Ser168, Gln170, Asp316, and Lys343 together coordinate 3-phosphoshikimate. Gln170 contributes to the phosphoenolpyruvate binding site. The active-site Proton acceptor is the Asp316. Residues Arg347 and Arg389 each coordinate phosphoenolpyruvate.

The protein belongs to the EPSP synthase family. In terms of assembly, monomer.

Its subcellular location is the cytoplasm. The enzyme catalyses 3-phosphoshikimate + phosphoenolpyruvate = 5-O-(1-carboxyvinyl)-3-phosphoshikimate + phosphate. Its pathway is metabolic intermediate biosynthesis; chorismate biosynthesis; chorismate from D-erythrose 4-phosphate and phosphoenolpyruvate: step 6/7. Its function is as follows. Catalyzes the transfer of the enolpyruvyl moiety of phosphoenolpyruvate (PEP) to the 5-hydroxyl of shikimate-3-phosphate (S3P) to produce enolpyruvyl shikimate-3-phosphate and inorganic phosphate. The protein is 3-phosphoshikimate 1-carboxyvinyltransferase of Bacillus cereus (strain ZK / E33L).